The primary structure comprises 217 residues: Ras-related protein Rab-39A (217 aa).

Residues Ser17, Gly20, Lys21, Ser22, Cys23, and Thr44 each coordinate GTP. Residue Ser22 participates in Mg(2+) binding. A switch-I region spans residues 39–47; sequence PACDPTVGV. 2 residues coordinate Mg(2+): Thr44 and Asp68. Gly71, His127, Lys128, Asp130, Ala158, and Lys159 together coordinate GTP. The interval 71–87 is switch-II; the sequence is GQERFRSITRSYYRNSV. 2 S-geranylgeranyl cysteine lipidation sites follow: Cys215 and Cys217. Cysteine methyl ester is present on Cys217.

It belongs to the small GTPase superfamily. Rab family. In terms of assembly, interacts (GDP-bound) with C9orf72; C9orf72 acts as a GEF for RAB39A. Interacts (GTP-bound) with HOPS complex components VPS39 and VPS41, and STX17; interaction between HOPS components and RAB39A contributes to obtaining a functional HOPS complex that promotes membrane fusion driven by STX17-SNAP29-VAMP8. Interacts with BECN1. Probably associates with the PI3K (PI3KC3/PI3K-III/class III phosphatidylinositol 3-kinase) complex. Interacts with UACA. Interacts with isoform a of RASSF1. Does not interact with isoform c of RASSF1. Mg(2+) serves as cofactor. In terms of processing, prenylated. Prenylation is required for association with cellular membranes.

The protein resides in the cell membrane. It localises to the cytoplasmic vesicle. It is found in the phagosome membrane. The protein localises to the late endosome membrane. Its subcellular location is the lysosome membrane. The protein resides in the autolysosome membrane. The enzyme catalyses GTP + H2O = GDP + phosphate + H(+). With respect to regulation, regulated by guanine nucleotide exchange factors (GEFs) including c9Orf72, which promote the exchange of bound GDP for free GTP. Regulated by GTPase activating proteins (GAPs) which increase the GTP hydrolysis activity. Inhibited by GDP dissociation inhibitors (GDIs). Functionally, the small GTPases Rab are key regulators of intracellular membrane trafficking, from the formation of transport vesicles to their fusion with membranes. Rabs cycle between an inactive GDP-bound form and an active GTP-bound form that is able to recruit to membranes different sets of downstream effectors directly responsible for vesicle formation, movement, tethering and fusion. RAB39A regulates autophagosome-lysosome fusion via recruitment of the HOPS endosomal tethering complex onto lysosomes; this process involves lysosomal RAB39A and autophagosomal RAB2A recruitment of HOPS subcomplexes VPS41-VPS16-VPS18-VPS33A and VPS39-VPS11, respectively, which assemble into a functional complex to mediate membrane tethering and SNAREs-driven membrane fusion. Also negatively regulates lipopolysaccharide (LPS)-induced autophagosome formation in macrophages, possibly by implicating PI3K. Promotes the delivery of MHC-I molecules from the ER to phagosomes and the generation of peptide-loaded MHC-I complexes in phagosomes, thus enhancing antigen cross-presentation by dendritic cells. Plays a role in the maturation and acidification of phagosomes that engulf pathogens, such as S.aureus and M.tuberculosis. Plays a role in the fusion of phagosomes with lysosomes. May be involved in multiple neurite formation. In Mus musculus (Mouse), this protein is Ras-related protein Rab-39A.